The following is a 192-amino-acid chain: Elongation factor P (192 aa).

This sequence belongs to the elongation factor P family.

The protein localises to the cytoplasm. The protein operates within protein biosynthesis; polypeptide chain elongation. Its function is as follows. Involved in peptide bond synthesis. Stimulates efficient translation and peptide-bond synthesis on native or reconstituted 70S ribosomes in vitro. Probably functions indirectly by altering the affinity of the ribosome for aminoacyl-tRNA, thus increasing their reactivity as acceptors for peptidyl transferase. In Borrelia hermsii (strain HS1 / DAH), this protein is Elongation factor P.